Here is a 136-residue protein sequence, read N- to C-terminus: Large ribosomal subunit protein eL27B (136 aa).

Belongs to the eukaryotic ribosomal protein eL27 family. Component of the large ribosomal subunit (LSU). Mature yeast ribosomes consist of a small (40S) and a large (60S) subunit. The 40S small subunit contains 1 molecule of ribosomal RNA (18S rRNA) and at least 33 different proteins. The large 60S subunit contains 3 rRNA molecules (25S, 5.8S and 5S rRNA) and at least 46 different proteins.

The protein localises to the cytoplasm. Component of the ribosome, a large ribonucleoprotein complex responsible for the synthesis of proteins in the cell. The small ribosomal subunit (SSU) binds messenger RNAs (mRNAs) and translates the encoded message by selecting cognate aminoacyl-transfer RNA (tRNA) molecules. The large subunit (LSU) contains the ribosomal catalytic site termed the peptidyl transferase center (PTC), which catalyzes the formation of peptide bonds, thereby polymerizing the amino acids delivered by tRNAs into a polypeptide chain. The nascent polypeptides leave the ribosome through a tunnel in the LSU and interact with protein factors that function in enzymatic processing, targeting, and the membrane insertion of nascent chains at the exit of the ribosomal tunnel. This chain is Large ribosomal subunit protein eL27B (rpl2702), found in Schizosaccharomyces pombe (strain 972 / ATCC 24843) (Fission yeast).